The primary structure comprises 560 residues: Synaptotagmin-5 (560 aa).

A helical transmembrane segment spans residues 2 to 22; it reads GFIVGVVIGLLVGIAIIIGFV. In terms of domain architecture, SMP-LTD spans 67–249; that stretch reads ERQKLTWLNH…WPVRKVIPII (183 aa). The interval 227–523 is phospholipid binding; it reads EETIRDAVED…YIGRCILTLT (297 aa). 2 consecutive C2 domains span residues 243–364 and 417–535; these read RKVI…DVWL and TTDE…KDWY. Residues Asp-278, Asp-284, Asp-334, Glu-336, Asp-451, Asp-457, Asp-506, Asp-508, and Asp-513 each coordinate Ca(2+).

Belongs to the synaptotagmin family. Requires Ca(2+) as cofactor.

It localises to the membrane. Its function is as follows. May be involved in membrane trafficking. This Arabidopsis thaliana (Mouse-ear cress) protein is Synaptotagmin-5 (SYT5).